The following is a 66-amino-acid chain: UPF0370 protein YpfN (66 aa).

The helical transmembrane segment at 4–24 (LAKYWWILVLVFLVGVLLNVI) threads the bilayer. Residues 39-66 (KPELPPHRDFNDKWDDEEDWPKKDQPKK) form a disordered region. Residues 42 to 51 (LPPHRDFNDK) are compositionally biased toward basic and acidic residues.

Belongs to the UPF0370 family.

It is found in the cell membrane. The chain is UPF0370 protein YpfN from Salmonella paratyphi A (strain AKU_12601).